Consider the following 305-residue polypeptide: Sulfate adenylyltransferase subunit 2 (305 aa).

The protein belongs to the PAPS reductase family. CysD subfamily. As to quaternary structure, heterodimer composed of CysD, the smaller subunit, and CysN.

It carries out the reaction sulfate + ATP + H(+) = adenosine 5'-phosphosulfate + diphosphate. It functions in the pathway sulfur metabolism; hydrogen sulfide biosynthesis; sulfite from sulfate: step 1/3. Its function is as follows. With CysN forms the ATP sulfurylase (ATPS) that catalyzes the adenylation of sulfate producing adenosine 5'-phosphosulfate (APS) and diphosphate, the first enzymatic step in sulfur assimilation pathway. APS synthesis involves the formation of a high-energy phosphoric-sulfuric acid anhydride bond driven by GTP hydrolysis by CysN coupled to ATP hydrolysis by CysD. This chain is Sulfate adenylyltransferase subunit 2, found in Pseudomonas entomophila (strain L48).